We begin with the raw amino-acid sequence, 495 residues long: Iroquois-class homeodomain protein irx-4-B (495 aa).

Positions 141 to 203 (GSTRRKNATR…NARRRLKKEN (63 aa)) form a DNA-binding region, homeobox; TALE-type. The tract at residues 203 to 245 (NKMTWPPRNKCSDEKRPYDEEEEEEEDSQKATIKNEKKTVDEE) is disordered. The span at 235–245 (IKNEKKTVDEE) shows a compositional bias: basic and acidic residues.

This sequence belongs to the TALE/IRO homeobox family.

Its subcellular location is the nucleus. Functionally, acts partially redundantly with other irx members in neural patterning. Required for formation of the posterior forebrain, midbrain, hindbrain, and to a lesser extent, spinal cord. Patterns the neuroectoderm in both the anterior/posterior and dorsal/ventral axes. Does not appear to play a role in pronephros kidney development. The sequence is that of Iroquois-class homeodomain protein irx-4-B (irx4-b) from Xenopus laevis (African clawed frog).